Here is a 271-residue protein sequence, read N- to C-terminus: Orotidine 5'-phosphate decarboxylase (271 aa).

Catalysis depends on Lys97, which acts as the Proton donor.

The protein belongs to the OMP decarboxylase family. Type 2 subfamily.

The catalysed reaction is orotidine 5'-phosphate + H(+) = UMP + CO2. The protein operates within pyrimidine metabolism; UMP biosynthesis via de novo pathway; UMP from orotate: step 2/2. This is Orotidine 5'-phosphate decarboxylase from Leptospira borgpetersenii serovar Hardjo-bovis (strain JB197).